Reading from the N-terminus, the 317-residue chain is Spore protein CgeB (317 aa).

Its function is as follows. May be involved in maturation of the outermost layer of the spore. May act as a glycosyltransferase that contributes to the glycosylation state of the spore. The sequence is that of Spore protein CgeB from Bacillus subtilis (strain 168).